The following is a 164-amino-acid chain: V-type proton ATPase 16 kDa proteolipid subunit (164 aa).

Residues 1 to 10 are Lumenal-facing; it reads MSDLCPPTAP. Residues 11–31 form a helical membrane-spanning segment; sequence FFGFMGAAVALIFANLGAAYG. Residues 32-53 lie on the Cytoplasmic side of the membrane; the sequence is TAKSGVGVSSMGVMKPDLVMKS. A helical transmembrane segment spans residues 54–74; it reads IIPVVMAGVLGIYGLIIAVII. Over 75 to 96 the chain is Lumenal; sequence GNGVKGPEGGKPQYSSFTGFAH. The helical transmembrane segment at 97-118 threads the bilayer; sequence LAAGLACGLSGMAAGIAIGIVG. Topologically, residues 119 to 130 are cytoplasmic; that stretch reads DAGVRASAQQAK. Residues 131-155 form a helical membrane-spanning segment; it reads LYVGMVLILIFAEALGLYGLIVGLI. At 156 to 164 the chain is on the lumenal side; the sequence is LTSKEAPCS.

It belongs to the V-ATPase proteolipid subunit family. In terms of assembly, V-ATPase is a heteromultimeric enzyme composed of a peripheral catalytic V1 complex (main components: subunits A, B, C, D, E, and F) attached to an integral membrane V0 proton pore complex (main component: the proteolipid protein; which is present as a hexamer that forms the proton-conducting pore).

The protein localises to the vacuole membrane. In terms of biological role, proton-conducting pore forming subunit of the membrane integral V0 complex of vacuolar ATPase. V-ATPase is responsible for acidifying a variety of intracellular compartments in eukaryotic cells. The sequence is that of V-type proton ATPase 16 kDa proteolipid subunit (VAP) from Chrysotila carterae (Marine alga).